Consider the following 622-residue polypeptide: Palmitoyltransferase ZDHHC13 (622 aa).

N-acetylmethionine is present on methionine 1. The Cytoplasmic portion of the chain corresponds to methionine 1 to glutamate 291. ANK repeat units lie at residues proline 43–proline 78, glutamate 81–glutamine 110, leucine 115–leucine 144, glutamate 148–methionine 177, asparagine 181–valine 211, histidine 216–isoleucine 245, and lysine 249–alanine 277. The helical transmembrane segment at leucine 292 to phenylalanine 312 threads the bilayer. Residues asparagine 313 to lysine 320 lie on the Lumenal side of the membrane. A helical transmembrane segment spans residues glycine 321–tyrosine 341. Residues lysine 342–leucine 347 are Cytoplasmic-facing. A helical transmembrane segment spans residues proline 348–phenylalanine 368. Residues proline 369–threonine 371 lie on the Lumenal side of the membrane. A helical transmembrane segment spans residues alanine 372–tyrosine 392. Residues lysine 393–histidine 470 are Cytoplasmic-facing. Residues threonine 426–leucine 476 enclose the DHHC domain. Residue cysteine 456 is the S-palmitoyl cysteine intermediate of the active site. A helical membrane pass occupies residues tyrosine 471–valine 491. Residues tyrosine 492–proline 518 lie on the Lumenal side of the membrane. The chain crosses the membrane as a helical span at residues tryptophan 519–isoleucine 539. Topologically, residues asparagine 540–valine 622 are cytoplasmic.

This sequence belongs to the DHHC palmitoyltransferase family. AKR/ZDHHC17 subfamily. In terms of assembly, interacts (via ANK repeats) with CLIP3. Interacts (via ANK repeats) with DNAJC5 (via C-terminus). Interacts (via ANK repeats) with HTT. Interacts (via ANK repeats) with MAP6. Interacts (via ANK repeats) with SNAP23. Interacts (via ANK repeats) with SNAP25. May interact (via ANK repeats) with SPRED2. As to expression, expressed in most adult tissues, but at low levels in the liver, skin, and lung.

The protein resides in the golgi apparatus membrane. It is found in the cytoplasmic vesicle membrane. It catalyses the reaction L-cysteinyl-[protein] + hexadecanoyl-CoA = S-hexadecanoyl-L-cysteinyl-[protein] + CoA. Its function is as follows. Palmitoyltransferase that could catalyze the addition of palmitate onto various protein substrates. Palmitoyltransferase for HTT and GAD2. May play a role in Mg(2+) transport. The polypeptide is Palmitoyltransferase ZDHHC13 (Mus musculus (Mouse)).